We begin with the raw amino-acid sequence, 358 residues long: Cholesterol galactosyltransferase (358 aa).

The protein belongs to the glycosyltransferase 2 family.

The enzyme catalyses cholesterol + UDP-alpha-D-galactose = cholesteryl 3-beta-D-galactoside + UDP + H(+). It functions in the pathway glycolipid biosynthesis. Its function is as follows. Galactosyltransferase involved in the synthesis of cholesterol glycolipids, which are formed by the use of host-derived cholesterol and have been shown to be immunogenic, and possibly contribute to Lyme disease pathogenesis. Catalyzes the formation of cholesteryl beta-D-galactopyranoside (CGal) from cholesterol and UDP-alpha-D-galactose. Cannot use GDP-mannose. The protein is Cholesterol galactosyltransferase of Borreliella burgdorferi (strain ATCC 35210 / DSM 4680 / CIP 102532 / B31) (Borrelia burgdorferi).